The sequence spans 379 residues: Anhydro-N-acetylmuramic acid kinase (379 aa).

An ATP-binding site is contributed by 9-16; sequence GTSVDGID.

The protein belongs to the anhydro-N-acetylmuramic acid kinase family.

The catalysed reaction is 1,6-anhydro-N-acetyl-beta-muramate + ATP + H2O = N-acetyl-D-muramate 6-phosphate + ADP + H(+). It participates in amino-sugar metabolism; 1,6-anhydro-N-acetylmuramate degradation. The protein operates within cell wall biogenesis; peptidoglycan recycling. Functionally, catalyzes the specific phosphorylation of 1,6-anhydro-N-acetylmuramic acid (anhMurNAc) with the simultaneous cleavage of the 1,6-anhydro ring, generating MurNAc-6-P. Is required for the utilization of anhMurNAc either imported from the medium or derived from its own cell wall murein, and thus plays a role in cell wall recycling. This Acaryochloris marina (strain MBIC 11017) protein is Anhydro-N-acetylmuramic acid kinase.